The chain runs to 196 residues: UPF0215 protein MA_4269 (196 aa).

It belongs to the UPF0215 family.

The chain is UPF0215 protein MA_4269 from Methanosarcina acetivorans (strain ATCC 35395 / DSM 2834 / JCM 12185 / C2A).